The following is a 106-amino-acid chain: Cell division topological specificity factor (106 aa).

The protein belongs to the MinE family.

In terms of biological role, prevents the cell division inhibition by proteins MinC and MinD at internal division sites while permitting inhibition at polar sites. This ensures cell division at the proper site by restricting the formation of a division septum at the midpoint of the long axis of the cell. The polypeptide is Cell division topological specificity factor (Prochlorococcus marinus (strain SARG / CCMP1375 / SS120)).